Consider the following 499-residue polypeptide: Probable cytochrome P450 cyp-35D1 (499 aa).

Cysteine 444 provides a ligand contact to heme.

It belongs to the cytochrome P450 family. Heme is required as a cofactor. Expressed in hypodermis, intestine and vulva upon thiabendazole (TBZ) exposure.

Functionally, cytochromes P450 are a group of heme-thiolate monooxygenases. They oxidize a variety of structurally unrelated compounds, including steroids, fatty acids, and xenobiotics. Involved in the oxidative metabolism of thiabendazole (TBZ). Catalyzes the conversion of TBZ to its hydroxylated form. The sequence is that of Probable cytochrome P450 cyp-35D1 from Caenorhabditis elegans.